The following is a 187-amino-acid chain: ATP synthase subunit b 2 (187 aa).

The helical transmembrane segment at 39–61 (SQLVWLVLSFAALYLLMSRVALP) threads the bilayer.

It belongs to the ATPase B chain family. In terms of assembly, F-type ATPases have 2 components, F(1) - the catalytic core - and F(0) - the membrane proton channel. F(1) has five subunits: alpha(3), beta(3), gamma(1), delta(1), epsilon(1). F(0) has three main subunits: a(1), b(2) and c(10-14). The alpha and beta chains form an alternating ring which encloses part of the gamma chain. F(1) is attached to F(0) by a central stalk formed by the gamma and epsilon chains, while a peripheral stalk is formed by the delta and b chains.

The protein localises to the cell inner membrane. In terms of biological role, f(1)F(0) ATP synthase produces ATP from ADP in the presence of a proton or sodium gradient. F-type ATPases consist of two structural domains, F(1) containing the extramembraneous catalytic core and F(0) containing the membrane proton channel, linked together by a central stalk and a peripheral stalk. During catalysis, ATP synthesis in the catalytic domain of F(1) is coupled via a rotary mechanism of the central stalk subunits to proton translocation. Component of the F(0) channel, it forms part of the peripheral stalk, linking F(1) to F(0). The chain is ATP synthase subunit b 2 from Parvibaculum lavamentivorans (strain DS-1 / DSM 13023 / NCIMB 13966).